Consider the following 508-residue polypeptide: Octopamine receptor beta-1R (508 aa).

At 1–111 (MTLLQRLQAM…SHLALVFVKC (111 aa)) the chain is on the extracellular side. A helical membrane pass occupies residues 112 to 132 (FIIGFIILAAILGNMLVIVSV). The Cytoplasmic segment spans residues 133–139 (MRHRKLR). Residues 140–160 (IITNYFVVSLAVADMLVALCA) form a helical membrane-spanning segment. Residues 161–186 (MTFNASVMISGKWMFGSVMCDMWNSF) are Extracellular-facing. An N-linked (GlcNAc...) asparagine glycan is attached at Asn-164. A helical membrane pass occupies residues 187-209 (DVYFSTASIMHLCCISVDRYYAI). Residues 210–223 (VQPLDYPLIMTQRR) lie on the Cytoplasmic side of the membrane. A helical transmembrane segment spans residues 224–244 (VFIMLLMVWLSPALLSFLPIC). Residues 245 to 270 (SGWYTTTENYKYLKSNPHICEFKVNK) are Extracellular-facing. A helical transmembrane segment spans residues 271 to 291 (AYAIVSSSMSFWIPGIVMLSM). Residues 292–351 (YYRIYQEADRQERLVYRSKVAALLLEKHLQISQIPKPRPSIQVEQSTISTMRRERKAART) are Cytoplasmic-facing. A helical membrane pass occupies residues 352 to 372 (LGIIMSAFLICWLPFFLWYIV). Over 373 to 383 (SSLCDSCITPR) the chain is Extracellular. A helical membrane pass occupies residues 384 to 404 (LLVGILFWIGYFNSALNPIIY). The Cytoplasmic portion of the chain corresponds to 405–508 (AYFNRDFRAA…MQQLHPLYTN (104 aa)). Positions 440–464 (RDLEFGGPSRRGTNGAQRTGSGSAE) are disordered. Residues 450-461 (RGTNGAQRTGSG) are compositionally biased toward polar residues.

This sequence belongs to the G-protein coupled receptor 1 family. In terms of tissue distribution, in the adult, expressed in the superior protocerebrum and the optic lobe medulla of the central nervous system, nurse cells of egg chambers in the ovary at oogenic stages 1-10, and spermatogonia and spermatocytes in the testis. Expressed in embryonic and larval ventral nerve cord and brain lobe, and the larval imaginal disk and larval salivary gland. Also expressed in larval synaptic boutons and retinal cells in the optic disk.

It is found in the cell membrane. Its function is as follows. Autoreceptor for octopamine, which is a neurotransmitter, neurohormone, and neuromodulator in invertebrates. Negatively regulates synaptic growth by activating the inhibitory G protein Galphao and limiting cAMP production. Antagonizes the action of Octbeta2R which stimulates synaptic growth. The protein is Octopamine receptor beta-1R of Drosophila melanogaster (Fruit fly).